The following is a 477-amino-acid chain: Glutamate--tRNA ligase 2 (477 aa).

The 'HIGH' region signature appears at 9–19; the sequence is PSPTGFLHIGG. The 'KMSKS' region signature appears at 238 to 242; sequence KLSKR. Position 241 (K241) interacts with ATP.

It belongs to the class-I aminoacyl-tRNA synthetase family. Glutamate--tRNA ligase type 1 subfamily. In terms of assembly, monomer.

The protein resides in the cytoplasm. It carries out the reaction tRNA(Glu) + L-glutamate + ATP = L-glutamyl-tRNA(Glu) + AMP + diphosphate. Catalyzes the attachment of glutamate to tRNA(Glu) in a two-step reaction: glutamate is first activated by ATP to form Glu-AMP and then transferred to the acceptor end of tRNA(Glu). This chain is Glutamate--tRNA ligase 2, found in Paramagnetospirillum magneticum (strain ATCC 700264 / AMB-1) (Magnetospirillum magneticum).